The following is a 336-amino-acid chain: Mitochondrial thiamine diphosphate carrier 1 (336 aa).

Transmembrane regions (helical) follow at residues 11 to 27 (RRALVDSLAGAISGGIS), 88 to 105 (VPALFMYMPYTAIQFTVL), 127 to 150 (YLSYVSGAIAGCTATIGSYPFDLL), 182 to 199 (LYSGLSPTLVEIIPYAGL), 230 to 246 (SVSSFQLFLCGFAAGTF), and 303 to 322 (GLFPSLVKSAPAGAVTFVVY). Solcar repeat units follow at residues 11-111 (RRAL…LKTF), 124-210 (LSPY…FKRS), and 231-328 (VSSF…ISDW).

The protein belongs to the mitochondrial carrier (TC 2.A.29) family. In terms of tissue distribution, ubiquitous with highest expression in pollen.

It is found in the mitochondrion inner membrane. Its function is as follows. Mitochondrial transporter that mediates uptake of thiamine diphosphate (ThDP) into mitochondria. This chain is Mitochondrial thiamine diphosphate carrier 1, found in Zea mays (Maize).